We begin with the raw amino-acid sequence, 809 residues long: Integrin beta pat-3 (809 aa).

An N-terminal signal peptide occupies residues 1–19; sequence MPPSTSLLLLAALLPFALP. At 20–737 the chain is on the extracellular side; the sequence is ASDWKTGEVT…KHKDCPPPVP (718 aa). 5 N-linked (GlcNAc...) asparagine glycosylation sites follow: N47, N141, N269, N373, and N400. The 200-residue stretch at 153–352 folds into the VWFA domain; that stretch reads DLYYLMDLSY…IFAVTKNNQD (200 aa). Intrachain disulfides connect C476-C496, C489-C499, C501-C510, C512-C543, C526-C541, C535-C546, C548-C563, C565-C586, C570-C584, C578-C589, C591-C600, C602-C625, C609-C623, C617-C628, and C630-C644. 4 I-EGF domains span residues 476 to 511, 512 to 564, 565 to 601, and 602 to 645; these read CERQDRIVTNSADCNGGDMVCGVCRCKGGNVGKYCE, CNRP…EFCE, CDNFNCPRHDRKICAEHGECNCGKCICAPGWTGRACE, and CPIS…AKCE. Residue N530 is glycosylated (N-linked (GlcNAc...) asparagine). N-linked (GlcNAc...) asparagine glycans are attached at residues N672, N693, and N721. A helical transmembrane segment spans residues 738–758; sequence VLAIVLGVIAGIVILGILLLL. Residues 759 to 809 are Cytoplasmic-facing; sequence LWKLLTVLHDRSEYATFNNERLMAKWDTNENPIYKQATTTFKNPVYAGKAN. At Y792 the chain carries Phosphotyrosine.

It belongs to the integrin beta chain family. As to quaternary structure, heterodimer of an alpha and a beta subunit. Interacts with alpha subunit ina-1. Interacts with alpha subunit pat-2. Component of an integrin containing attachment complex, composed of at least pat-2, pat-3, pat-4, pat-6, unc-52, unc-97 and unc-112. May interact with tns-1 (via C-terminus). Phosphorylated. Dephosphorylated by dep-1. In terms of tissue distribution, expressed in body wall muscles (at protein level). Expressed in gonadal sheath cells and spermatheca. Expressed in vulval cells and along the basal laminae that separate the vulval cells from the uterus (at the protein level).

The protein resides in the cell membrane. It localises to the lateral cell membrane. The protein localises to the basolateral cell membrane. Its subcellular location is the cytoplasm. It is found in the myofibril. The protein resides in the sarcomere. It localises to the m line. The protein localises to the cell junction. Its subcellular location is the focal adhesion. Integrin alpha ina-1/beta pat-3 is a receptor for laminin. Integrin alpha pat-2/beta pat-3 recognizes the sequence R-G-D in its ligands. Plays a role in cell migration, morphogenesis and probably in cell-cell interactions. During gonad morphogenesis, involved in distal tip cell (DTC)-mediated guidance of gonad elongation, in maintaining their sharp tapering morphology and in their migration. Component of an integrin containing attachment complex, which is required for muscle development and maintenance. Involved in the assembly of dense bodies and M lines during body wall muscle embryonic development by recruiting one of their components, cpna-1, to integrin-mediated attachment sites. May play a similar role in the assembly of dense bodies in gonadal myoepithelial sheath cells. Probably by acting as a receptor for apoptotic cells, plays a role in the clearance of apoptotic cells during mid-embryogenesis. Required for ovulation. Dephosphorylated, probably within the alpha pat-2/beta pat-3 integrin receptor complex, by the phosphatase dep-1, which leads to down-stream effects including the negative regulation of let-23 signaling and vulval induction. When unphosphosphorylated, recruits the cytoplasmic adapter protein tln-1 to the plasma membrane of secondary vulval precursor cells. This promotes the linking of focal adhesion sites to the F-actin cytoskeleton, and it also acts to restrict the mobility of the let-23 receptor on the plasma membrane of vulval cells which thereby attenuates let-23 signaling. Plays a role in axon regeneration after injury. The polypeptide is Integrin beta pat-3 (Caenorhabditis elegans).